The sequence spans 483 residues: MIKLEQVVEILKKDNNFREISSAGEYYFNWPKEVNFDQLSYDSRKSTKDTLFFAKGLNFKKEYLTDLEAAFYVSEFDYEVALPAIIVTDVKRAMALIAANFYEFPQNKLKTLALTGTKGKTTSAYFAKAILDKMNGGKTALLSTAQTTLDGQNYFKSELTTPESLDLLEMMAKALENGMTHLVMEVSSQAYKTERVYGLTFDVGVFLNISPDHIGPVEHPTLEDYFYCKRQLLKNSRYFVANAEMNHFAIIKEELNERKIPHAFYGADSENKIIESKGLHFVTDGSVSGEFDIRLLGRFNQENALATALATKALGASFENIRQGLASAIVPGRMELLTAKNGAHIYIDYAHNGLSLENLVEVVEDHHAGQLFLVLGSTGNKGESRRKDFGQVIENHPRLNVILTTDDSNRENPKTIADEIASFVSRELDFELDREFAIKKAISKTQNSDDAVIIAGKGADMFQLKDGKREPYIGDSPAAQKYL.

S43 provides a ligand contact to UDP-N-acetyl-alpha-D-muramoyl-L-alanyl-D-glutamate. Residue 116–122 (GTKGKTT) participates in ATP binding. Residues 160-161 (TT), S187, and R195 each bind UDP-N-acetyl-alpha-D-muramoyl-L-alanyl-D-glutamate. K229 is subject to N6-carboxylysine.

It belongs to the MurCDEF family. MurE subfamily. Carboxylation is probably crucial for Mg(2+) binding and, consequently, for the gamma-phosphate positioning of ATP.

Its subcellular location is the cytoplasm. Its pathway is cell wall biogenesis; peptidoglycan biosynthesis. Functionally, catalyzes the addition of an amino acid to the nucleotide precursor UDP-N-acetylmuramoyl-L-alanyl-D-glutamate (UMAG) in the biosynthesis of bacterial cell-wall peptidoglycan. The chain is UDP-N-acetylmuramyl-tripeptide synthetase from Lactococcus lactis subsp. cremoris (strain MG1363).